Consider the following 256-residue polypeptide: tRNA (guanine-N(7)-)-methyltransferase (256 aa).

Positions 1–43 (MDVDPVNSEMELDNKPTCETVPGLPQKKHYRQRAHSNPHSDHD) are disordered. Over residues 26-36 (QKKHYRQRAHS) the composition is skewed to basic residues. S-adenosyl-L-methionine is bound by residues Gly-74, 97–98 (EI), 132–133 (NA), and Leu-152. Asp-155 is an active-site residue. S-adenosyl-L-methionine is bound at residue 230-232 (TEE).

This sequence belongs to the class I-like SAM-binding methyltransferase superfamily. TrmB family.

The protein resides in the nucleus. It carries out the reaction guanosine(46) in tRNA + S-adenosyl-L-methionine = N(7)-methylguanosine(46) in tRNA + S-adenosyl-L-homocysteine. It functions in the pathway tRNA modification; N(7)-methylguanine-tRNA biosynthesis. Catalyzes the formation of N(7)-methylguanine at position 46 (m7G46) in tRNA. The protein is tRNA (guanine-N(7)-)-methyltransferase of Caenorhabditis briggsae.